The chain runs to 179 residues: ADP-ribosylation factor-like protein 5A (179 aa).

Residue glycine 2 is the site of N-myristoyl glycine attachment. GTP is bound by residues 23-30 (GLDNAGKT), 66-70 (DIGGQ), 125-128 (NKQD), and alanine 159.

This sequence belongs to the small GTPase superfamily. Arf family. Low amounts were found in most tissues examined with highest levels in brain, intestine and thymus.

Its function is as follows. Lacks ADP-ribosylation enhancing activity. In Rattus norvegicus (Rat), this protein is ADP-ribosylation factor-like protein 5A (Arl5a).